The following is a 190-amino-acid chain: Lipid A acyltransferase PagP (190 aa).

The first 24 residues, 1 to 24, serve as a signal peptide directing secretion; that stretch reads MNRYLLTTLSAPLLALFFSFSLQA. Catalysis depends on residues His62, Asp105, and Ser106.

It belongs to the lipid A palmitoyltransferase family. As to quaternary structure, homodimer.

It is found in the cell outer membrane. The catalysed reaction is a lipid A + a 1,2-diacyl-sn-glycero-3-phosphocholine = a hepta-acyl lipid A + a 2-acyl-sn-glycero-3-phosphocholine. The enzyme catalyses a lipid IVA + a 1,2-diacyl-sn-glycero-3-phosphocholine = a lipid IVB + a 2-acyl-sn-glycero-3-phosphocholine. It catalyses the reaction a lipid IIA + a 1,2-diacyl-sn-glycero-3-phosphocholine = a lipid IIB + a 2-acyl-sn-glycero-3-phosphocholine. In terms of biological role, transfers a fatty acid residue from the sn-1 position of a phospholipid to the N-linked hydroxyfatty acid chain on the proximal unit of lipid A or its precursors. The protein is Lipid A acyltransferase PagP of Pantoea ananatis (strain LMG 20103).